Here is a 277-residue protein sequence, read N- to C-terminus: Thymidylate synthase (277 aa).

Residue arginine 21 participates in dUMP binding. Histidine 51 serves as a coordination point for (6R)-5,10-methylene-5,6,7,8-tetrahydrofolate. Residue 126–127 (RR) participates in dUMP binding. Cysteine 159 functions as the Nucleophile in the catalytic mechanism. Residues 179–182 (RSAD), asparagine 190, and 220–222 (HLY) each bind dUMP. Aspartate 182 is a binding site for (6R)-5,10-methylene-5,6,7,8-tetrahydrofolate. Alanine 276 is a binding site for (6R)-5,10-methylene-5,6,7,8-tetrahydrofolate.

This sequence belongs to the thymidylate synthase family. Bacterial-type ThyA subfamily. In terms of assembly, homodimer.

It localises to the cytoplasm. It carries out the reaction dUMP + (6R)-5,10-methylene-5,6,7,8-tetrahydrofolate = 7,8-dihydrofolate + dTMP. It participates in pyrimidine metabolism; dTTP biosynthesis. Its function is as follows. Catalyzes the reductive methylation of 2'-deoxyuridine-5'-monophosphate (dUMP) to 2'-deoxythymidine-5'-monophosphate (dTMP) while utilizing 5,10-methylenetetrahydrofolate (mTHF) as the methyl donor and reductant in the reaction, yielding dihydrofolate (DHF) as a by-product. This enzymatic reaction provides an intracellular de novo source of dTMP, an essential precursor for DNA biosynthesis. The chain is Thymidylate synthase from Thioalkalivibrio sulfidiphilus (strain HL-EbGR7).